The sequence spans 136 residues: UPF0299 membrane protein PM0880 (136 aa).

4 helical membrane passes run 5–25, 29–49, 67–87, and 92–112; these read IVDL…GEWI, LNIG…GLTF, YMAL…DVLF, and VLLL…GLLS.

Belongs to the UPF0299 family.

The protein localises to the cell inner membrane. This is UPF0299 membrane protein PM0880 from Pasteurella multocida (strain Pm70).